The chain runs to 255 residues: High-affinity branched-chain amino acid transport ATP-binding protein BraF (255 aa).

The ABC transporter domain occupies 6–254; that stretch reads LEVSGLTMRF…PDVIKAYLGE (249 aa). 38–45 is a binding site for ATP; that stretch reads GPNGAGKT.

It belongs to the ABC transporter superfamily.

It is found in the cell inner membrane. Component of the high affinity leucine, isoleucine, valine, transport system (LIV-I), which is operative without Na(+) and is specific for alanine and threonine, in addition to branched-chain amino acids. In Pseudomonas aeruginosa (strain ATCC 15692 / DSM 22644 / CIP 104116 / JCM 14847 / LMG 12228 / 1C / PRS 101 / PAO1), this protein is High-affinity branched-chain amino acid transport ATP-binding protein BraF (braF).